Here is a 401-residue protein sequence, read N- to C-terminus: (1R,4R,5S)-(-)-guaia-6,10(14)-diene synthase (401 aa).

Aspartate 134 and glutamate 139 together coordinate Mg(2+). Positions 134–138 (DDQFD) match the DDXXD motif motif. Arginine 242 contacts substrate. Positions 288 and 292 each coordinate Mg(2+). Lysine 295 contacts substrate. Aspartate 296 contributes to the Mg(2+) binding site. 375–376 (RY) provides a ligand contact to substrate.

Belongs to the terpene synthase family. The cofactor is Mg(2+).

The catalysed reaction is (2E,6E)-farnesyl diphosphate = (1R,4R,5S)-(-)-guaia-6,10(14)-diene + diphosphate. It participates in secondary metabolite biosynthesis; terpenoid biosynthesis. Its function is as follows. Catalyzes the conversion of (2E,6E)-farnesyl diphosphate (FPP) to yield the bicyclic sesquiterpene guaia-6,10(14)-diene via a 1,10-cyclization, which requires the abstraction of the pyrophosphate from FPP to yield the (E,E)-germacradienyl cation. The only accepted substrate is farnesyl diphosphate (FPP). This is (1R,4R,5S)-(-)-guaia-6,10(14)-diene synthase from Fusarium mangiferae (Mango malformation disease fungus).